The chain runs to 213 residues: Hemolysin-3 homolog (213 aa).

Transmembrane regions (helical) follow at residues 11 to 31 (AITHGIGVLLSIPALVFLIIF), 41 to 61 (IVSFTIFGVSMLLLYLSSTLL), 75 to 95 (IIDHSAIYVLIAGTYTPFLLG), 103 to 123 (FTLLVIVWSLALGGIVFKIFF), 127 to 147 (FILLSTFVYLVMGWLMIIAVK), 157 to 177 (GFSLLFLGGILYSVGTIFYIW), and 185 to 205 (AIWHSFVLGGSAAMFFCVLFY).

The protein belongs to the UPF0073 (Hly-III) family.

It localises to the cell membrane. The chain is Hemolysin-3 homolog (yplQ) from Bacillus subtilis (strain 168).